The sequence spans 365 residues: DNA replication and repair protein RecF (365 aa).

30–37 (GPNGSGKT) provides a ligand contact to ATP.

It belongs to the RecF family.

Its subcellular location is the cytoplasm. In terms of biological role, the RecF protein is involved in DNA metabolism; it is required for DNA replication and normal SOS inducibility. RecF binds preferentially to single-stranded, linear DNA. It also seems to bind ATP. This Azotobacter vinelandii (strain DJ / ATCC BAA-1303) protein is DNA replication and repair protein RecF.